Here is a 217-residue protein sequence, read N- to C-terminus: tRNA (guanine-N(7)-)-methyltransferase (217 aa).

S-adenosyl-L-methionine is bound by residues E44, E69, D96, and D118. D118 is an active-site residue. Residues K122, D154, and 191 to 194 (TEYE) contribute to the substrate site.

The protein belongs to the class I-like SAM-binding methyltransferase superfamily. TrmB family.

It catalyses the reaction guanosine(46) in tRNA + S-adenosyl-L-methionine = N(7)-methylguanosine(46) in tRNA + S-adenosyl-L-homocysteine. Its pathway is tRNA modification; N(7)-methylguanine-tRNA biosynthesis. In terms of biological role, catalyzes the formation of N(7)-methylguanine at position 46 (m7G46) in tRNA. The chain is tRNA (guanine-N(7)-)-methyltransferase from Bacillus mycoides (strain KBAB4) (Bacillus weihenstephanensis).